The sequence spans 601 residues: Peptide transporter PTR2 (601 aa).

Residues 1–10 (MLNHPSQGSD) show a composition bias toward polar residues. The disordered stretch occupies residues 1-66 (MLNHPSQGSD…DEDFEGPTEE (66 aa)). Residues 1–150 (MLNHPSQGSD…PVFGGYVADT (150 aa)) lie on the Extracellular side of the membrane. The span at 14–28 (DEKQGDFPVIEEEKT) shows a compositional bias: basic and acidic residues. A Phosphotyrosine modification is found at Tyr-37. Ser-39 and Ser-45 each carry phosphoserine. A compositionally biased stretch (polar residues) spans 42-53 (VANSTERYNLSP). Over residues 55–66 (PEDEDFEGPTEE) the composition is skewed to acidic residues. Residues 151–172 (FWGKYNTICCGTAIYIAGIFIL) traverse the membrane as a helical segment. Residues 173 to 182 (FITSIPSVGN) are Cytoplasmic-facing. The chain crosses the membrane as a helical span at residues 183-202 (RDSAIGGFIAAIILIGIATG). The Extracellular segment spans residues 203–210 (MIKANLSV). A helical transmembrane segment spans residues 211–229 (LIADQLPKRKPSIKVLKSG). The Cytoplasmic segment spans residues 230 to 267 (ERVIVDSNITLQNVFMFFYFMINVGSLSLMATTELEYH). A helical transmembrane segment spans residues 268 to 287 (KGFWAAYLLPFCFFWIAVVT). At 288–294 (LIFGKKQ) the chain is on the extracellular side. A helical transmembrane segment spans residues 295 to 316 (YIQRPIGDKVIAKSFKVCWILT). The Cytoplasmic segment spans residues 317–378 (KNKFDFNAAK…ISSFITQASM (62 aa)). A helical transmembrane segment spans residues 379–399 (MELHGIPNDFLQAFDSIALII). Residues 400-412 (FIPIFEKFVYPFI) lie on the Extracellular side of the membrane. Residues 413-429 (RRYTPLKPITKIFFGFM) form a helical membrane-spanning segment. At 430–448 (FGSFAMTWAAVLQSFVYKA) the chain is on the cytoplasmic side. A helical transmembrane segment spans residues 449 to 466 (GPWYNEPLGHNTPNHVHV). Residues 467–494 (CWQIPAYVLISFSEIFASITGLEYAYSK) are Extracellular-facing. Residues 495 to 513 (APASMKSFIMSIFLLTNAF) form a helical membrane-spanning segment. The Cytoplasmic segment spans residues 514 to 526 (GSAIGCALSPVTV). Residues 527-547 (DPKFTWLFTGLAVACFISGCL) form a helical membrane-spanning segment. Over 548 to 554 (FWLCFRK) the chain is Extracellular. Residues 555-577 (YNDTEEEMNAMDYEEEDEFDLNP) traverse the membrane as a helical segment. Topologically, residues 578-601 (ISAPKANDIEILEPMESLRSTTKY) are cytoplasmic. Residue Ser-594 is modified to Phosphoserine.

It belongs to the major facilitator superfamily. Proton-dependent oligopeptide transporter (POT/PTR) (TC 2.A.17) family.

The protein localises to the membrane. Functionally, uptake of small peptides. The sequence is that of Peptide transporter PTR2 (PTR2) from Saccharomyces cerevisiae (strain ATCC 204508 / S288c) (Baker's yeast).